Reading from the N-terminus, the 207-residue chain is FMN-dependent NADH:quinone oxidoreductase 3 (207 aa).

Residues S10 and 16–18 each bind FMN; that span reads SIS.

It belongs to the azoreductase type 1 family. In terms of assembly, homodimer. The cofactor is FMN.

The catalysed reaction is 2 a quinone + NADH + H(+) = 2 a 1,4-benzosemiquinone + NAD(+). The enzyme catalyses N,N-dimethyl-1,4-phenylenediamine + anthranilate + 2 NAD(+) = 2-(4-dimethylaminophenyl)diazenylbenzoate + 2 NADH + 2 H(+). Quinone reductase that provides resistance to thiol-specific stress caused by electrophilic quinones. Its function is as follows. Also exhibits azoreductase activity. Catalyzes the reductive cleavage of the azo bond in aromatic azo compounds to the corresponding amines. This Burkholderia lata (strain ATCC 17760 / DSM 23089 / LMG 22485 / NCIMB 9086 / R18194 / 383) protein is FMN-dependent NADH:quinone oxidoreductase 3.